The chain runs to 501 residues: MLPPKIFFEKVKEIIWPIERKELKLFIPMALMMLCILFNFGALRSIKDSLVVPSMGAEIISFLKLWLVLPSCVIFTILYVKLSNKLNFEYIFYSIVGTFLLFFLLFAYIIYPNQDIYHPNDAMINNLIASYPNLKWFIKIGSKWSYALMYIFSELWSAVVINLMFWQFANHIFDTAKAKRFYPVLGMVGNIGLIIAGSVLVFFSSGQYIIDSELLTDSYNSSSNNSIMLQPIISIIVTAGIIAMFLFRIINKFILTNSINVLDVKKVAAKTKTKLALIESIKLIIHSKYIGRIALLIICYGLLINIVEGPWKAKIKELHPNTVDYVNFMGMFNIWMGISCVTFMIIGSNILRRLGWLISALLTPIMLSITGFMFFIFIIFIEEIGTCFGDFNLLYVAIIVGAIQNILSKSSKYSLFDSTKEMAYIPLSLELRTKGKAAVEVIGTKFGKSLGAFIQSLIFIIIPTATFDSIIIYLLVIFIVMMNLWIWNIIKLNKEYIKLCQ.

Helical transmembrane passes span 23–43, 59–79, 90–110, 146–166, 183–203, 227–247, 293–313, 326–346, 361–381, 383–403, 446–466, and 470–490; these read LKLF…FGAL, IISF…TILY, YIFY…AYII, YALM…LMFW, PVLG…LVFF, IMLQ…MFLF, IALL…PWKA, VNFM…FMII, LLTP…IIFI, EIGT…VGAI, FGKS…PTAT, and IIIY…WNII.

This sequence belongs to the ADP/ATP translocase tlc family.

Its subcellular location is the cell membrane. Provides the rickettsial cell with host ATP in exchange for rickettsial ADP. This is an obligate exchange system. This energy acquiring activity is an important component of rickettsial parasitism. The polypeptide is ADP,ATP carrier protein 3 (tlcC) (Rickettsia prowazekii (strain Madrid E)).